Here is a 259-residue protein sequence, read N- to C-terminus: NADP-dependent 3-hydroxy acid dehydrogenase (259 aa).

Ile11 serves as a coordination point for NADP(+). Ser42 carries the phosphoserine modification. Phosphothreonine is present on Thr43. Residues Asp65, Asn92, Arg126, Tyr158, Lys162, and Val191 each coordinate NADP(+). Tyr158 (proton acceptor) is an active-site residue. Lys162 serves as the catalytic Lowers pKa of active site Tyr.

It belongs to the short-chain dehydrogenases/reductases (SDR) family. As to quaternary structure, homotetramer.

Its subcellular location is the cytoplasm. It localises to the nucleus. The catalysed reaction is L-allo-threonine + NADP(+) = aminoacetone + CO2 + NADPH. NADP-dependent dehydrogenase with broad substrate specificity acting on 3-hydroxy acids. Catalyzes the NADP-dependent oxidation of L-allo-threonine to L-2-amino-3-keto-butyrate, which is spontaneously decarboxylated into aminoacetone. Also acts on D-threonine, L-serine, D-serine, D-3-hydroxyisobutyrate, L-3-hydroxyisobutyrate, D-glycerate and L-glycerate. This Schizosaccharomyces pombe (strain 972 / ATCC 24843) (Fission yeast) protein is NADP-dependent 3-hydroxy acid dehydrogenase.